The following is a 201-amino-acid chain: Probable nicotinate-nucleotide adenylyltransferase (201 aa).

This sequence belongs to the NadD family.

It carries out the reaction nicotinate beta-D-ribonucleotide + ATP + H(+) = deamido-NAD(+) + diphosphate. Its pathway is cofactor biosynthesis; NAD(+) biosynthesis; deamido-NAD(+) from nicotinate D-ribonucleotide: step 1/1. In terms of biological role, catalyzes the reversible adenylation of nicotinate mononucleotide (NaMN) to nicotinic acid adenine dinucleotide (NaAD). This Clostridium botulinum (strain Loch Maree / Type A3) protein is Probable nicotinate-nucleotide adenylyltransferase.